The chain runs to 341 residues: L-threonine 3-dehydrogenase (341 aa).

Cys-38 is a binding site for Zn(2+). Residues Thr-40 and His-43 each act as charge relay system in the active site. Zn(2+)-binding residues include His-63, Glu-64, Cys-93, Cys-96, Cys-99, and Cys-107. NAD(+) is bound by residues Ile-175, Asp-195, Arg-200, Leu-262–Ile-264, and Ile-286–Tyr-287.

The protein belongs to the zinc-containing alcohol dehydrogenase family. As to quaternary structure, homotetramer. The cofactor is Zn(2+).

Its subcellular location is the cytoplasm. The catalysed reaction is L-threonine + NAD(+) = (2S)-2-amino-3-oxobutanoate + NADH + H(+). The protein operates within amino-acid degradation; L-threonine degradation via oxydo-reductase pathway; glycine from L-threonine: step 1/2. Catalyzes the NAD(+)-dependent oxidation of L-threonine to 2-amino-3-ketobutyrate. The chain is L-threonine 3-dehydrogenase from Shewanella putrefaciens (strain CN-32 / ATCC BAA-453).